Reading from the N-terminus, the 155-residue chain is Small ribosomal subunit protein uS7cz/uS7cy (155 aa).

The protein belongs to the universal ribosomal protein uS7 family. In terms of assembly, part of the 30S ribosomal subunit.

Its subcellular location is the plastid. It is found in the chloroplast. In terms of biological role, one of the primary rRNA binding proteins, it binds directly to 16S rRNA where it nucleates assembly of the head domain of the 30S subunit. The sequence is that of Small ribosomal subunit protein uS7cz/uS7cy (rps7-A) from Lemna minor (Common duckweed).